Consider the following 418-residue polypeptide: Tektin-1 (418 aa).

4 coiled-coil regions span residues 20–107, 134–177, 266–308, and 332–383; these read NKSQ…SYKE, QELQ…DLRD, NGLK…QQEG, and IAQY…ENTI.

The protein belongs to the tektin family. Microtubule inner protein component of sperm flagellar doublet microtubules. In terms of processing, ubiquitinated, leading to its degradation. Deubiquitinated by USP16, promoting its stability.

The protein localises to the cytoplasm. It is found in the cytoskeleton. Its subcellular location is the cilium axoneme. It localises to the flagellum axoneme. Functionally, microtubule inner protein (MIP) part of the dynein-decorated doublet microtubules (DMTs) in cilia and flagellar axoneme. Forms filamentous polymers in the walls of ciliary and flagellar microtubules. The polypeptide is Tektin-1 (Tekt1) (Mus musculus (Mouse)).